The sequence spans 333 residues: MLGRPMKPSKCQECRDRAAWLDMFTALALAVFKTALGVLSGSMALQAHSLHSFGDFLTKGINLASVKLSSRPANSAFPYGYGKVQFLSANFIGISLMAGAAAMLWYNVTHLGSGHVQVPEVWAVFGALISAGTAELMHRYLRCVAEHTNSPAIMAAAADNRGDAYSSLAVLAGIVLSILGWVAADHLAAILVSLLVLRIGAVIAWDSIHGLMDGSVPSHRIDGIRQLLAAHHPGVSVVDLRGRRMGETWEVDLQLSISSQVTVEECHALTRELESRIAREEPHACHIRIRFIPQSGDATKTAVIETAAAVDEFAYLVEASAALRPLGHSRNGG.

The next 5 helical transmembrane spans lie at 19 to 39 (AWLD…LGVL), 86 to 106 (FLSA…MLWY), 111 to 131 (LGSG…LISA), 170 to 190 (VLAG…LAAI), and 191 to 211 (LVSL…IHGL).

The protein belongs to the cation diffusion facilitator (CDF) transporter (TC 2.A.4) family.

It is found in the cell inner membrane. Functionally, expression of just the minimal mamAB gene cluster (amb0961 to amb0978), including this gene, is sufficient to form a minimal magnetosome chain with small magnetite particles. This is Putative transporter MamV from Paramagnetospirillum magneticum (strain ATCC 700264 / AMB-1) (Magnetospirillum magneticum).